The primary structure comprises 1349 residues: MRCASRSDELVFFVNGRKVMERNVDPEGTLLTFLRKNLRLTGTKYACGRGGCGACTVMVSKHDPVSRKIQRHFSVTACLMPICSLYGAAVTTVEGVGSIKTRLHPVQERIAKSHGTQCGFCTPGMVMSMYTLLRNHPQPSEEQLTEALGGNLCRCTGYRPILESGRTFCMESNSCQQKGTGKCCLDWGENDSSRLGKKNEICTKLFAKEEFQSLDPTQELIFPPELLRMAENPEKRTLTFYGERVTWISPGTLKDLLELKVKHPEAPLVVGNTSLGPAMKSQRQFHPVLLSPARISELSMVTKTSDGLTIGAGCSLAQTQDILAERIAELPEEKTQTYRALLKHLRSLAGQQIRNMASLGGHVISRHCCSDLNPVLAVSNATLNLISAEGTRQIPLNEHFLAGLASADLKPEEILESVHIPHSQKWEFVSAFRQAQCQQNALPHVNAGMRVLLKEGTDSIEDLSIAYGGVGAATISAHRSCQQLLGRRWNELMLDEACRLLLDEVSLPGSAPGGRVEFKRTLVVSFLFKFYLEVLQELKKLVKLFSVAVGADSRHRSEVSDQFLSALEDFPVTIPQGVQTYQNVDPHQPLQDPVGRPIMHLSALKHATGEAMFCDDIPVVDKELFMALVTSSRAHAKIISIDVSKALELPEVVDVITAEDIPGTNGAEGDKLLAVEEVTCVGQIICAVVAETDVQAKRATEKIEITYEDLEPVIFTIKDAIKHNSFLCPEKKLEQGNVEEAFEKVDQTIEGEVHVGGQEHFYMETQRVLVIPKTEDKELDIYVSTQDPAHVQKTVSSTLNIPINRITCHVKRVGGGFGGKVGKPAVFGAIAAVGAIKTGHPIRLVLDREDDMLITGGRHPLFGKYKVGFTNNGRIKALDIECYINGGCTLDDSELVTEFLILKLENAYKIRNLRFRGRACMTNLPSNTAFRGFGFPQGALVTESCITAVAAKCGLPPEKIREKNMYKTVDKTIYKQAFNPETLIRCWNECLDKSSFHSRRMQVEEFNKKNYWKKKGIAIIPMKFSVGFAATSYHQAAALVHIYTDGSVLVTHGGNELGQGIHTKMLQVASRELKIPMSCIHISETSTATVPNTIATAASVGADVNGRAVQNACQILLKRLEPIIKKHPEGTWENWIEAAFEQRISLSATGYFRGYKAFMDWEKGVGDPFPYYVYGAACSEVEIDCLTGAHKKIRTDIIMDACCSLNPAIDIGQIEGSFIQGMGLYTTEELKYSPEGILYSRSPDEYKIPTITDVPEEFNVSLLPSSQTPLTIYSSKGLGESGMFLGSSVFFAIADAVATVRRERDIAEDFMVQSPATPERVRMACADRFTKMIPRDDPETFKPWSIPIA.

Positions aspartate 8 to valine 96 constitute a 2Fe-2S ferredoxin-type domain. 4 residues coordinate [2Fe-2S] cluster: cysteine 47, cysteine 52, cysteine 55, and cysteine 78. Mo-molybdopterin is bound at residue glutamine 117. [2Fe-2S] cluster is bound by residues cysteine 118, cysteine 121, cysteine 153, and cysteine 155. Mo-molybdopterin is bound at residue cysteine 155. Residues phenylalanine 240 to lysine 425 enclose the FAD-binding PCMH-type domain. FAD-binding positions include leucine 268–leucine 275, alanine 349, serine 358, histidine 362, aspartate 371, and leucine 415. Mo-molybdopterin is bound by residues glycine 816–phenylalanine 817, alanine 1098–glycine 1101, glutamine 1213, and leucine 1278. Glutamate 1280 serves as the catalytic Proton acceptor; for azaheterocycle hydroxylase activity.

Belongs to the xanthine dehydrogenase family. Homodimer. The cofactor is [2Fe-2S] cluster. FAD serves as cofactor. Mo-molybdopterin is required as a cofactor. Only detected at very few levels in nasal mucosa.

Its subcellular location is the cytoplasm. The catalysed reaction is an aldehyde + O2 + H2O = a carboxylate + H2O2 + H(+). Oxidase with broad substrate specificity, oxidizing aromatic azaheterocycles, such as phthalazine, as well as aldehydes, such as benzaldehyde and retinal. In Macaca fascicularis (Crab-eating macaque), this protein is Aldehyde oxidase 2 (AOX2).